Consider the following 206-residue polypeptide: Thymidylate kinase (206 aa).

ATP is bound at residue 14–21 (GGEGIGKS).

Belongs to the thymidylate kinase family.

The catalysed reaction is dTMP + ATP = dTDP + ADP. In terms of biological role, phosphorylation of dTMP to form dTDP in both de novo and salvage pathways of dTTP synthesis. The polypeptide is Thymidylate kinase (Rickettsia bellii (strain OSU 85-389)).